The sequence spans 199 residues: uncharacterized protein (199 aa).

A helical transmembrane segment spans residues 17 to 37 (AGAVTLGIGFFALASALWFLI).

The protein resides in the membrane. This is an uncharacterized protein from Homo sapiens (Human).